A 276-amino-acid chain; its full sequence is Phosphonates import ATP-binding protein PhnC (276 aa).

Residues 5 to 253 (IRVERLNKTF…LLNDLYGADL (249 aa)) form the ABC transporter domain. 37–44 (GASGSGKS) provides a ligand contact to ATP.

Belongs to the ABC transporter superfamily. Phosphonates importer (TC 3.A.1.9.1) family. In terms of assembly, the complex is composed of two ATP-binding proteins (PhnC), two transmembrane proteins (PhnE) and a solute-binding protein (PhnD).

It is found in the cell inner membrane. It carries out the reaction phosphonate(out) + ATP + H2O = phosphonate(in) + ADP + phosphate + H(+). Part of the ABC transporter complex PhnCDE involved in phosphonates import. Responsible for energy coupling to the transport system. The protein is Phosphonates import ATP-binding protein PhnC of Stutzerimonas stutzeri (Pseudomonas stutzeri).